Reading from the N-terminus, the 351-residue chain is Transaldolase (351 aa).

Catalysis depends on Lys-138, which acts as the Schiff-base intermediate with substrate.

This sequence belongs to the transaldolase family. Type 2 subfamily.

Its subcellular location is the cytoplasm. The catalysed reaction is D-sedoheptulose 7-phosphate + D-glyceraldehyde 3-phosphate = D-erythrose 4-phosphate + beta-D-fructose 6-phosphate. It participates in carbohydrate degradation; pentose phosphate pathway; D-glyceraldehyde 3-phosphate and beta-D-fructose 6-phosphate from D-ribose 5-phosphate and D-xylulose 5-phosphate (non-oxidative stage): step 2/3. Its function is as follows. Transaldolase is important for the balance of metabolites in the pentose-phosphate pathway. In Neisseria meningitidis serogroup C (strain 053442), this protein is Transaldolase.